Here is an 858-residue protein sequence, read N- to C-terminus: Leucine--tRNA ligase (858 aa).

Residues 42–52 (PYPSGRLHMGH) carry the 'HIGH' region motif. The 'KMSKS' region motif lies at 618-622 (KMSKS). Lys621 provides a ligand contact to ATP.

This sequence belongs to the class-I aminoacyl-tRNA synthetase family.

Its subcellular location is the cytoplasm. It carries out the reaction tRNA(Leu) + L-leucine + ATP = L-leucyl-tRNA(Leu) + AMP + diphosphate. The protein is Leucine--tRNA ligase of Aeromonas salmonicida (strain A449).